An 89-amino-acid polypeptide reads, in one-letter code: MTLANIKSAKKRAVQSEKRRQHNASQRSMMRTYIKKVYAQVAAGEKSAAESAFVEMQKVVDRMASKGLIHANKAANHKSKLAAQIKKLA.

Residues 1–29 (MTLANIKSAKKRAVQSEKRRQHNASQRSM) are disordered.

Belongs to the bacterial ribosomal protein bS20 family.

In terms of biological role, binds directly to 16S ribosomal RNA. In Haemophilus influenzae (strain 86-028NP), this protein is Small ribosomal subunit protein bS20.